Here is a 470-residue protein sequence, read N- to C-terminus: MCENQLKTKADGTAQIEVIPCKICGDKSSGIHYGVITCEGCKGFFRRSQQNNASYSCPRQRNCLIDRTNRNRCQHCRLQKCLALGMSRDAVKFGRMSKKQRDSLYAEVQKHQQRLQEQRQQQSGEAEALARVYSSSISNGLSNLNTETGGTYANGHVIDLPKSEGYYNIDSGQPSPDQSGLDMTGIKQIKQEPIYDLTSVHNLFTYSSFNNGQLAPGITMSEIDRIAQNIIKSHLETCQYTMEELHQLAWQTHTYEEIKAYQSKSREALWQQCAIQITHAIQYVVEFAKRITGFMELCQNDQILLLKSGCLEVVLVRMCRAFNPLNNTVLFEGKYGGMQMFKALGSDDLVNEAFDFAKNLCSLQLTEEEIALFSSAVLISPDRAWLLEPRKVQKLQEKIYFALQHVIQKNHLDDETLAKLIAKIPTITAVCNLHGEKLQVFKQSHPDIVNTLFPPLYKELFNPDCAAVCK.

The segment at residues Val-18–Phe-93 is a DNA-binding region (nuclear receptor). 2 NR C4-type zinc fingers span residues Cys-21–Cys-41 and Cys-57–Cys-81. The span at Leu-104–Glu-117 shows a compositional bias: basic and acidic residues. The tract at residues Leu-104–Glu-127 is disordered. In terms of domain architecture, NR LBD spans Glu-222–Leu-460. The AF-2 motif lies at Leu-456–Phe-461.

This sequence belongs to the nuclear hormone receptor family. NR1 subfamily. Monomer. Interacts with CRX. Isoform 2 expressed with circadian rhythm in eye and pineal gland. Isoform 1 expressed in retina cortex, thalamus, and hypothalamus.

Its subcellular location is the nucleus. The protein resides in the nucleoplasm. Nuclear receptor that binds DNA as a monomer to ROR response elements (RORE) containing a single core motif half-site 5'-AGGTCA-3' preceded by a short A-T-rich sequence. Considered to have intrinsic transcriptional activity, have some natural ligands such as all-trans retinoic acid (ATRA) and other retinoids which act as inverse agonists repressing the transcriptional activity. Required for normal postnatal development of rod and cone photoreceptor cells. Modulates rod photoreceptors differentiation at least by inducing the transcription factor NRL-mediated pathway. In cone photoreceptor cells, regulates transcription of OPN1SW. Involved in the regulation of the period length and stability of the circadian rhythm. May control cytoarchitectural patterning of neocortical neurons during development. May act in a dose-dependent manner to regulate barrel formation upon innervation of layer IV neurons by thalamocortical axons. May play a role in the suppression of osteoblastic differentiation through the inhibition of RUNX2 transcriptional activity. In terms of biological role, critical for hindlimb motor control and for the differentiation of amacrine and horizontal cells in the retina. Regulates the expression of PTF1A synergistically with FOXN4. The polypeptide is Nuclear receptor ROR-beta (Rorb) (Rattus norvegicus (Rat)).